A 251-amino-acid chain; its full sequence is uncharacterized protein (251 aa).

12-21 (TGASSQGDIG) is an NADP(+) binding site. Position 148 (S148) interacts with substrate. The active-site Proton acceptor is the Y161.

The protein belongs to the short-chain dehydrogenases/reductases (SDR) family.

This is an uncharacterized protein from Bacillus subtilis (strain 168).